The following is a 387-amino-acid chain: Protein salvador homolog 1 (387 aa).

2 positions are modified to phosphoserine: Ser95 and Ser138. WW domains follow at residues 201–234 and 236–269; these read LPLP…HPLE and EGLP…HPCA. Residue Thr212 is modified to Phosphothreonine. Residues 323-370 form the SARAH domain; the sequence is ILKWELFQLADLDTYQGMLKLLFMKELEQIVKLYEAYRQALVTELENR.

As to quaternary structure, homodimer. Stabilized through interaction with STK3/MST2 or STK4/MST1. Interacts (via SARAH domain) with isoform 1 of NEK2. Interacts with ESR1 only in the presence of STK3/MST2. Interacts with WTIP and AJUBA. Phosphorylated by STK3/MST2 and STK4/MST1. Phosphorylation is not required for SAV1 stability and may increase the number of protein binding sites on the scaffold molecule.

The protein resides in the nucleus. Its subcellular location is the cytoplasm. Its function is as follows. Regulator of STK3/MST2 and STK4/MST1 in the Hippo signaling pathway which plays a pivotal role in organ size control and tumor suppression by restricting proliferation and promoting apoptosis. The core of this pathway is composed of a kinase cascade wherein STK3/MST2 and STK4/MST1, in complex with its regulatory protein SAV1, phosphorylates and activates LATS1/2 in complex with its regulatory protein MOB1, which in turn phosphorylates and inactivates YAP1 oncoprotein and WWTR1/TAZ. Phosphorylation of YAP1 by LATS1/2 inhibits its translocation into the nucleus to regulate cellular genes important for cell proliferation, cell death, and cell migration. SAV1 is required for STK3/MST2 and STK4/MST1 activation and promotes cell-cycle exit and terminal differentiation in developing epithelial tissues. Plays a role in centrosome disjunction by regulating the localization of NEK2 to centrosomes, and its ability to phosphorylate CROCC and CEP250. In conjunction with STK3/MST2, activates the transcriptional activity of ESR1 through the modulation of its phosphorylation. The sequence is that of Protein salvador homolog 1 from Rattus norvegicus (Rat).